The chain runs to 322 residues: Ferrochelatase (322 aa).

Fe cation-binding residues include His-193 and Glu-274.

This sequence belongs to the ferrochelatase family.

Its subcellular location is the cytoplasm. The enzyme catalyses heme b + 2 H(+) = protoporphyrin IX + Fe(2+). Its pathway is porphyrin-containing compound metabolism; protoheme biosynthesis; protoheme from protoporphyrin-IX: step 1/1. Functionally, catalyzes the ferrous insertion into protoporphyrin IX. The polypeptide is Ferrochelatase (Aliivibrio fischeri (strain MJ11) (Vibrio fischeri)).